Here is a 148-residue protein sequence, read N- to C-terminus: uncharacterized protein (148 aa).

An N-terminal signal peptide occupies residues methionine 1–alanine 20.

This is an uncharacterized protein from Haemophilus influenzae (strain ATCC 51907 / DSM 11121 / KW20 / Rd).